A 536-amino-acid polypeptide reads, in one-letter code: MEVSVIGNPQARICRAELAYRELGFRFGSDVISGESRNRVSFCNQSSKWKEIAIRCSSRSVKCEAIVSDDASPFLKSTPKSKSLESVKLFVGLPLDTVSDCNNVNHLKAITAGLKALKLLGVEGIELPIFWGVVEKEAAGKYEWSGYLAVAEIVKKVGLKLHASLSFHGSKQTEIGLPDWVAKIGDAEPGIYFTDRYGQQYKDCLSFAVDDVPVLDGKTPMEVYRGFCESFKSAFADYMGNTITGITLGLGPDGELKYPSHQHNAKLSGAGEFQCYDKHMLSALKGYAESTGNPLWGLGGPHDAPAYDQQPNSSSFFSDGGSWESQYGDFFLSWYSSLLTSHADRVLSVASSAFSGIGVPLCGKLPLLHQWHKLRSHPSELTAGFYSSNGQDRYEAIAEIFAKNSCRMIIPGMDLSDEHQSPESLSSPESLLGHIKTSCKKQGVVVSGQNSSTPVPGGFERIVENLKDENVGIDLFTYQRMGALFFSPEHFHAFTVFVRNLSQFELSSDDQASEAEVEAETASIGSGTGAPSLQTA.

S47 is subject to Phosphoserine. The disordered stretch occupies residues 511-536 (QASEAEVEAETASIGSGTGAPSLQTA).

This sequence belongs to the glycosyl hydrolase 14 family. Mostly expressed in young floral buds, flowers and roots, and, to a later extent, in stems and leaves.

The protein localises to the cytoplasm. The protein is Inactive beta-amylase 9 (BAM9) of Arabidopsis thaliana (Mouse-ear cress).